The following is a 453-amino-acid chain: Nuclear hormone receptor family member nhr-12 (453 aa).

A disordered region spans residues 1-37 (MEQIPQEQKTEPFLASFTTTEKLGTETPTTSITPNTQ). The span at 18-36 (TTTEKLGTETPTTSITPNT) shows a compositional bias: low complexity. Positions 44-119 (KPNCAVCNEV…VGMNPECVQN (76 aa)) form a DNA-binding region, nuclear receptor. 2 NR C4-type zinc fingers span residues 47–67 (CAVC…CRAC) and 83–107 (CRAG…YDKC). An NR LBD domain is found at 178 to 451 (FSPASLPGLS…ENFVNIINGK (274 aa)).

Belongs to the nuclear hormone receptor family.

The protein localises to the nucleus. In terms of biological role, orphan nuclear receptor. The polypeptide is Nuclear hormone receptor family member nhr-12 (nhr-12) (Caenorhabditis elegans).